The chain runs to 196 residues: C-type lectin domain family 3 member A (196 aa).

An N-terminal signal peptide occupies residues 1–22 (MAKNGLVLCILVVSLLLDQTDG). 3 disulfides stabilise this stretch: cysteine 68–cysteine 78, cysteine 95–cysteine 191, and cysteine 167–cysteine 183. Residues 74-192 (VHKKCYLASE…CRSSKRYICE (119 aa)) form the C-type lectin domain.

It localises to the secreted. Functionally, promotes cell adhesion to laminin and fibronectin. The chain is C-type lectin domain family 3 member A (Clec3a) from Mus musculus (Mouse).